The following is a 316-amino-acid chain: Nucleoprotein (316 aa).

Residues Tyr-43, Tyr-46, Val-76, Arg-122, and Lys-240 each contribute to the RNA site.

This sequence belongs to the tenuiviruses nucleocapsid protein family.

The protein localises to the virion. It is found in the host cytoplasm. Its function is as follows. Encapsidates the genome, protecting it from nucleases. The encapsidated genomic RNA is termed the nucleocapsid (NC), and serves as template for viral transcription and replication. In Maize stripe virus (MStV), this protein is Nucleoprotein.